The primary structure comprises 138 residues: Basic phospholipase A2 RV-4 (138 aa).

The signal sequence occupies residues 1-16; the sequence is MRTLWIVAVCLIGVEG. 7 disulfides stabilise this stretch: Cys-42–Cys-131, Cys-44–Cys-60, Cys-59–Cys-111, Cys-65–Cys-138, Cys-66–Cys-104, Cys-73–Cys-97, and Cys-91–Cys-102. 3 residues coordinate Ca(2+): Tyr-43, Gly-45, and Gly-47. The active site involves His-63. A Ca(2+)-binding site is contributed by Asp-64. The active site involves Asp-105.

The protein belongs to the phospholipase A2 family. Group II subfamily. D49 sub-subfamily. As to quaternary structure, heterodimer of a weakly toxic basic protein having phospholipase A2 activity (RV-4) and a non-toxic acidic protein which inhibits its enzymatic activity but potentiates its lethal potency and neurotoxicity (RV-7). Ca(2+) serves as cofactor. Expressed by the venom gland.

It localises to the secreted. The catalysed reaction is a 1,2-diacyl-sn-glycero-3-phosphocholine + H2O = a 1-acyl-sn-glycero-3-phosphocholine + a fatty acid + H(+). In terms of biological role, heterodimer RV-4/RV-7: acts as a presynaptic neurotoxin. Functionally, monomer: snake venom phospholipase A2 (PLA2) that acts as a presynaptic neurotoxin. PLA2 catalyzes the calcium-dependent hydrolysis of the 2-acyl groups in 3-sn-phosphoglycerides. The chain is Basic phospholipase A2 RV-4 from Daboia siamensis (Eastern Russel's viper).